The sequence spans 244 residues: Protein TIFY 10b (244 aa).

One can recognise a Tify domain in the interval 97–132; that stretch reads QEPEKRQLTIFYGGKVLVFNDFPADKAKGLMQLASK. Positions 185 to 210 match the Jas motif; the sequence is PIARKASLHRFLEKRKDRLNAKTPYQ. A Nuclear localization signal motif is present at residues 187 to 194; it reads ARKASLHR. Residues 193 to 244 are disordered; that stretch reads HRFLEKRKDRLNAKTPYQASPSDATPVKKEPESQPWLGLGPNAVVKPIERGQ. The span at 194 to 204 shows a compositional bias: basic and acidic residues; the sequence is RFLEKRKDRLN.

Belongs to the TIFY/JAZ family. In terms of processing, ubiquitinated. Targeted for degradation by the SCF(COI1) E3 ubiquitin ligase-proteasome pathway during jasmonate signaling.

Its subcellular location is the nucleus. In terms of biological role, repressor of jasmonate responses. The protein is Protein TIFY 10b of Oryza sativa subsp. indica (Rice).